The chain runs to 185 residues: Ribosome-recycling factor (185 aa).

This sequence belongs to the RRF family.

It is found in the cytoplasm. Functionally, responsible for the release of ribosomes from messenger RNA at the termination of protein biosynthesis. May increase the efficiency of translation by recycling ribosomes from one round of translation to another. The polypeptide is Ribosome-recycling factor (Hamiltonella defensa subsp. Acyrthosiphon pisum (strain 5AT)).